Consider the following 332-residue polypeptide: Glycerol-3-phosphate dehydrogenase [NAD(P)+] (332 aa).

W11, R30, and K108 together coordinate NADPH. Sn-glycerol 3-phosphate is bound by residues K108, G137, and S139. A141 is an NADPH binding site. Residues K192, D245, S255, R256, and N257 each contribute to the sn-glycerol 3-phosphate site. K192 serves as the catalytic Proton acceptor. Position 256 (R256) interacts with NADPH. NADPH-binding residues include V280 and E282.

Belongs to the NAD-dependent glycerol-3-phosphate dehydrogenase family.

Its subcellular location is the cytoplasm. It carries out the reaction sn-glycerol 3-phosphate + NAD(+) = dihydroxyacetone phosphate + NADH + H(+). The catalysed reaction is sn-glycerol 3-phosphate + NADP(+) = dihydroxyacetone phosphate + NADPH + H(+). Its pathway is membrane lipid metabolism; glycerophospholipid metabolism. Its function is as follows. Catalyzes the reduction of the glycolytic intermediate dihydroxyacetone phosphate (DHAP) to sn-glycerol 3-phosphate (G3P), the key precursor for phospholipid synthesis. The sequence is that of Glycerol-3-phosphate dehydrogenase [NAD(P)+] from Burkholderia ambifaria (strain MC40-6).